The following is a 107-amino-acid chain: Inner membrane protein YgbE (107 aa).

Over M1–E20 the chain is Cytoplasmic. A helical membrane pass occupies residues T21–M43. Residues L44 to F52 are Periplasmic-facing. The chain crosses the membrane as a helical span at residues F53 to L75. Over H76–S86 the chain is Cytoplasmic. The helical transmembrane segment at I87–L106 threads the bilayer. G107 is a topological domain (periplasmic).

Its subcellular location is the cell inner membrane. This is Inner membrane protein YgbE (ygbE) from Escherichia coli (strain K12).